A 174-amino-acid polypeptide reads, in one-letter code: Adenine phosphoribosyltransferase (174 aa).

This sequence belongs to the purine/pyrimidine phosphoribosyltransferase family. As to quaternary structure, homodimer.

The protein resides in the cytoplasm. The catalysed reaction is AMP + diphosphate = 5-phospho-alpha-D-ribose 1-diphosphate + adenine. It functions in the pathway purine metabolism; AMP biosynthesis via salvage pathway; AMP from adenine: step 1/1. In terms of biological role, catalyzes a salvage reaction resulting in the formation of AMP, that is energically less costly than de novo synthesis. In Phocaeicola vulgatus (strain ATCC 8482 / DSM 1447 / JCM 5826 / CCUG 4940 / NBRC 14291 / NCTC 11154) (Bacteroides vulgatus), this protein is Adenine phosphoribosyltransferase.